Reading from the N-terminus, the 194-residue chain is Protein GrpE (194 aa).

Residues 1-24 (MEEKDKEEKVTGENLEPEDKNLEQ) are compositionally biased toward basic and acidic residues. Residues 1-41 (MEEKDKEEKVTGENLEPEDKNLEQEDKEEVVGPQEEQQIDE) are disordered.

This sequence belongs to the GrpE family. Homodimer.

It is found in the cytoplasm. In terms of biological role, participates actively in the response to hyperosmotic and heat shock by preventing the aggregation of stress-denatured proteins, in association with DnaK and GrpE. It is the nucleotide exchange factor for DnaK and may function as a thermosensor. Unfolded proteins bind initially to DnaJ; upon interaction with the DnaJ-bound protein, DnaK hydrolyzes its bound ATP, resulting in the formation of a stable complex. GrpE releases ADP from DnaK; ATP binding to DnaK triggers the release of the substrate protein, thus completing the reaction cycle. Several rounds of ATP-dependent interactions between DnaJ, DnaK and GrpE are required for fully efficient folding. This chain is Protein GrpE, found in Carboxydothermus hydrogenoformans (strain ATCC BAA-161 / DSM 6008 / Z-2901).